A 237-amino-acid chain; its full sequence is Class B acid phosphatase (237 aa).

A signal peptide spans Met-1 to Ala-23. Residue Asp-69 is the Nucleophile of the active site. Positions 69 and 71 each coordinate Mg(2+). The active-site Proton donor is the Asp-71. Residues Thr-137–Gly-138 and Lys-177 contribute to the substrate site. Asp-192 provides a ligand contact to Mg(2+).

This sequence belongs to the class B bacterial acid phosphatase family. As to quaternary structure, homotetramer. Mg(2+) is required as a cofactor.

The protein localises to the periplasm. The enzyme catalyses a phosphate monoester + H2O = an alcohol + phosphate. In terms of biological role, dephosphorylates several organic phosphate monoesters. Also has a phosphotransferase activity catalyzing the transfer of low-energy phosphate groups from organic phosphate monoesters to free hydroxyl groups of various organic compounds. This is Class B acid phosphatase from Rahnella sp. (strain Y9602).